A 497-amino-acid polypeptide reads, in one-letter code: Glycerol kinase (497 aa).

Thr-11 contributes to the ADP binding site. ATP-binding residues include Thr-11, Thr-12, and Ser-13. Thr-11 lines the sn-glycerol 3-phosphate pocket. Arg-15 provides a ligand contact to ADP. Sn-glycerol 3-phosphate is bound by residues Arg-81, Glu-82, Tyr-133, and Asp-242. Residues Arg-81, Glu-82, Tyr-133, Asp-242, and Gln-243 each contribute to the glycerol site. Residues Thr-264 and Gly-306 each coordinate ADP. The ATP site is built by Thr-264, Gly-306, Gln-310, and Gly-407. Residues Gly-407 and Asn-411 each contribute to the ADP site.

The protein belongs to the FGGY kinase family.

The enzyme catalyses glycerol + ATP = sn-glycerol 3-phosphate + ADP + H(+). It functions in the pathway polyol metabolism; glycerol degradation via glycerol kinase pathway; sn-glycerol 3-phosphate from glycerol: step 1/1. With respect to regulation, inhibited by fructose 1,6-bisphosphate (FBP). Key enzyme in the regulation of glycerol uptake and metabolism. Catalyzes the phosphorylation of glycerol to yield sn-glycerol 3-phosphate. The polypeptide is Glycerol kinase (Alcanivorax borkumensis (strain ATCC 700651 / DSM 11573 / NCIMB 13689 / SK2)).